A 247-amino-acid polypeptide reads, in one-letter code: MKMANPKYKRILIKLSGEALAGERGVGIDIQTVQTIAKEIQEVHSLGIEIALVIGGGNLWRGEPAAEAGMDRVQADYTGMLGTVMNALVMADSLQQVGVDTRVQTAIAMQQVAEPYVRGRALRHLEKGRIVIFGAGIGSPYFSTDTTAALRAAEIEADAILMAKNGVDGVYNADPKKDKTAVKFEELTHRDVINKGLRIMDSTASTLSMDNDIDLVVFNMNQPGNIKRVVFGENIGTTVSNNIEEKE.

ATP is bound at residue 14-17 (KLSG). Residues 22–27 (GERGVG) are involved in allosteric activation by GTP. Residue Gly56 participates in UMP binding. ATP is bound by residues Gly57 and Arg61. UMP contacts are provided by residues Asp76 and 137–144 (IGSPYFST). Asn165, Tyr171, and Asp174 together coordinate ATP.

Belongs to the UMP kinase family. As to quaternary structure, homohexamer.

Its subcellular location is the cytoplasm. The enzyme catalyses UMP + ATP = UDP + ADP. The protein operates within pyrimidine metabolism; CTP biosynthesis via de novo pathway; UDP from UMP (UMPK route): step 1/1. Its activity is regulated as follows. Allosterically activated by GTP. Inhibited by UTP, 5-bromo-UTP and 5-iodo-UTP. Catalyzes the reversible phosphorylation of UMP to UDP, with ATP as the most efficient phosphate donor. This chain is Uridylate kinase (pyrH), found in Streptococcus pneumoniae serotype 4 (strain ATCC BAA-334 / TIGR4).